The chain runs to 685 residues: Stromal interaction molecule 1 (685 aa).

A signal peptide spans 1–22 (MDVCARLALWLLWGLLLHQGQS). Over 23 to 213 (LSHSHSEKNT…LLTRHNHLKD (191 aa)) the chain is Extracellular. Residues 24–43 (SHSHSEKNTGASSGATSEES) form a disordered region. Residues 32-41 (TGASSGATSE) show a composition bias toward low complexity. 2 consecutive EF-hand domains span residues 64-97 (SFEAVRNIHKLMDDDANGDVDVEESDEFLREDLN) and 102-126 (TVKHSTFHGEDKLISVEDLWKAWKA). Positions 76, 78, 80, 82, and 87 each coordinate Ca(2+). N131 and N171 each carry an N-linked (GlcNAc...) asparagine glycan. Residues 132 to 200 (WTVDEVIQWL…QLKALDTVLF (69 aa)) enclose the SAM domain. A helical transmembrane segment spans residues 214–234 (FMLVVSIVIGVGGCWFAYIQN). The Cytoplasmic segment spans residues 235–685 (RYSKEHMKKM…LKIFKKPLKK (451 aa)). Positions 248 to 442 (LEGLHRAEQS…IEILCGFQIV (195 aa)) form a coiled coil. S257 carries the phosphoserine modification. Residues 344–442 (PEALQKWLQL…IEILCGFQIV (99 aa)) form an SOAR/CAD region. The interval 475–483 (DDVDDMDEE) is contributes to fast Ca(2+)-dependent inactivation of CRAC channels. Over residues 490-499 (MQSPSLQSSV) the composition is skewed to low complexity. Residues 490–542 (MQSPSLQSSVRQRLTEPQHGLGSQRDLTHSDSESSLHTSDRQRVAPKPPQMGR) form a disordered region. T504 is modified (phosphothreonine). S512 is subject to Phosphoserine. The segment covering 515-532 (DLTHSDSESSLHTSDRQR) has biased composition (basic and acidic residues). T517 is subject to Phosphothreonine. Phosphoserine occurs at positions 519, 521, 523, 524, 567, 575, 602, 608, 618, 621, and 628. The disordered stretch occupies residues 596–685 (LMELNPSVPP…LKIFKKPLKK (90 aa)). A compositionally biased stretch (low complexity) spans 608 to 620 (SPLLDSSHSHSPS). Positions 642–645 (TRIP) match the Microtubule tip localization signal motif. A compositionally biased stretch (acidic residues) spans 655 to 666 (EEDNGSIGEETD). S660 carries the phosphoserine modification. A Phosphothreonine modification is found at T665. At S668 the chain carries Phosphoserine. Residues 670 to 685 (GRKKFPLKIFKKPLKK) show a composition bias toward basic residues. The interval 672–685 (KKFPLKIFKKPLKK) is required for generation of inwardly rectifying CRAC currents.

In terms of assembly, monomer in the presence of Ca(2+). It oligomerizes in absence of Ca(2+). Forms homooligomers and heterooligomers with STIM2. Interacts with pore-forming subunits of CRAC channels, ORAI1, ORAI2 and ORAI3; this interaction is potentiated upon Ca(2+) store depletion. Interacts (via the transmembrane region and the SOAR/CAD domain) with SPPL3; the interaction promotes the binding of STIM1 to ORAI1. Interacts with ORAI1. Interacts with MAPRE1; probably required for targeting to the growing microtubule plus ends. Interacts with CRACR2A/EFCAB4B; the interaction is direct and takes place in absence of Ca(2+). Forms a complex with CRACR2A/EFCAB4B and ORAI1 at low concentration of Ca(2+), the complex dissociates at elevated Ca(2+) concentrations. Interacts with SARAF, promoting a slow inactivation of STIM1-dependent SOCE activity, possibly by facilitating the deoligomerization of STIM1. Interacts with EFHB; the interaction takes place upon Ca(2+)-store depletion and inhibits the association with SARAF. Interacts with ASPH. Interacts with SLC35G1; intracellular Ca(2+)-dependent. May interact with ATP1A1, ATP2A2, ATP2B1, ATP2B4, KPNB1 and XPO1; through SLC35G1. Interacts with TMEM203. Interacts with STIMATE, promoting STIM1 conformational switch. Interacts with TMEM178A. Interacts with CASQ1 (via C-terminal end and preferentially with the monomeric form); this interaction increases in response to a depletion of intracellular Ca(2+), decreases both STIM1 aggregation and clustering, interaction of STIM1 with ORAI1 and store-operated Ca(2+) entry (SOCE) activity. Interacts with ADCY8. In terms of processing, glycosylation is required for cell surface expression. Post-translationally, phosphorylated predominantly on Ser residues.

It localises to the cell membrane. The protein localises to the endoplasmic reticulum membrane. Its subcellular location is the sarcoplasmic reticulum. It is found in the cytoplasm. The protein resides in the cytoskeleton. Acts as a Ca(2+) sensor that gates two major inward rectifying Ca(2+) channels at the plasma membrane: Ca(2+) release-activated Ca(2+) (CRAC) channels and arachidonate-regulated Ca(2+)-selective (ARC) channels. Plays a role in mediating store-operated Ca(2+) entry (SOCE), a Ca(2+) influx following depletion of intracellular Ca(2+) stores. Upon Ca(2+) depletion, translocates from the endoplasmic reticulum to the plasma membrane where it activates CRAC channel pore-forming subunits ORA1, ORA2 and ORAI3 to generate sustained and oscillatory Ca(2+) entry. Involved in enamel formation. The protein is Stromal interaction molecule 1 of Rattus norvegicus (Rat).